Reading from the N-terminus, the 260-residue chain is Putative protein phosphatase 2C-like protein 44 (260 aa).

One can recognise a PPM-type phosphatase domain in the interval 41 to 259 (YYTVDRLSYA…SSISCVVIRF (219 aa)).

The protein belongs to the PP2C family.

The chain is Putative protein phosphatase 2C-like protein 44 from Arabidopsis thaliana (Mouse-ear cress).